Reading from the N-terminus, the 88-residue chain is Augerpeptide Hhe9a (88 aa).

A signal peptide spans 1–21 (MMTKTGLVLLFAFLLVFPVSS). A propeptide spanning residues 22 to 49 (LPMDAEAGHARLEMDKRDAGNEAWTRLL) is cleaved from the precursor. Intrachain disulfides connect Cys-56/Cys-71, Cys-61/Cys-73, and Cys-67/Cys-86.

Expressed by the venom duct.

It is found in the secreted. The sequence is that of Augerpeptide Hhe9a from Hastula hectica (Sea snail).